We begin with the raw amino-acid sequence, 505 residues long: Deoxyguanosinetriphosphate triphosphohydrolase (505 aa).

The HD domain maps to 66–273; that stretch reads RLTHSMEVQQ…MEAADDISYC (208 aa).

The protein belongs to the dGTPase family. Type 1 subfamily. In terms of assembly, homotetramer. Requires Mg(2+) as cofactor.

The enzyme catalyses dGTP + H2O = 2'-deoxyguanosine + triphosphate + H(+). Functionally, dGTPase preferentially hydrolyzes dGTP over the other canonical NTPs. This is Deoxyguanosinetriphosphate triphosphohydrolase from Escherichia coli (strain K12 / MC4100 / BW2952).